A 436-amino-acid polypeptide reads, in one-letter code: ATP-dependent RNA helicase RhlB (436 aa).

The Q motif motif lies at 9 to 37 (QKFADFPLHKEVHQALNEAGFEFCTPIQA). In terms of domain architecture, Helicase ATP-binding spans 40–219 (LPILLEKKDI…YDHMNEPEKV (180 aa)). Residue 53-60 (AQTGTGKT) coordinates ATP. Residues 165–168 (DEAD) carry the DEAD box motif. Residues 243 to 390 (KMPLLLSLLE…VTSYDSDALL (148 aa)) form the Helicase C-terminal domain. Residues 392 to 436 (DIPPPVRIHRKPSTHTRNTRDRSSGRPQGGQRNGPRRHDKTRRHS) form a disordered region. Positions 425–436 (GPRRHDKTRRHS) are enriched in basic residues.

It belongs to the DEAD box helicase family. RhlB subfamily. Component of the RNA degradosome, which is a multiprotein complex involved in RNA processing and mRNA degradation.

The protein localises to the cytoplasm. It catalyses the reaction ATP + H2O = ADP + phosphate + H(+). DEAD-box RNA helicase involved in RNA degradation. Has RNA-dependent ATPase activity and unwinds double-stranded RNA. This Shewanella pealeana (strain ATCC 700345 / ANG-SQ1) protein is ATP-dependent RNA helicase RhlB.